The chain runs to 694 residues: Phosphatase and actin regulator 4-A (694 aa).

Basic and acidic residues-rich tracts occupy residues 1 to 13 and 46 to 72; these read MEDRSEEGGDHSE and SSDSFRETSEVLERKISTRKPREELIK. Disordered regions lie at residues 1–29, 42–169, 192–403, 426–445, and 450–572; these read MEDRSEEGGDHSEMPSAPSTPPSKRKSKF, RKRK…QPLP, VNEV…HIRI, LFMQNDMGPSEEGTRVRSLP, and LLKV…QIRQ. One copy of the RPEL 1 repeat lies at 55–80; that stretch reads EVLERKISTRKPREELIKRGLLVEVP. Polar residues predominate over residues 240–267; the sequence is SISTSVTQESAVAGQKSDSSNRLQSSAP. Positions 300 to 317 are enriched in low complexity; the sequence is AELSLALAGSPLSPAGSR. Pro residues-rich tracts occupy residues 318 to 327 and 372 to 381; these read PSPPLPPKRA and SNPPVPPLTL. Acidic residues-rich tracts occupy residues 455-467, 499-511, and 519-529; these read DDEDDESLEDESL, QEEEEGGVSDTDS, and DDEEEEEEEET. RPEL repeat units lie at residues 576–601 and 613–638; these read TQLNRRLSQRPTAEELEQRNILQKNE and RRLTRKLSQRPTVAELVERKILRFNE.

It belongs to the phosphatase and actin regulator family. In terms of assembly, binds ppp1ca and actin.

Its subcellular location is the cytoplasm. The protein localises to the cell projection. It localises to the lamellipodium. Its function is as follows. Regulator of protein phosphatase 1 (PP1) required for neural tube and optic fissure closure, and enteric neural crest cell (ENCCs) migration during development. Acts as an activator of PP1. During neural tube closure, localizes to the ventral neural tube and activates PP1, leading to down-regulate cell proliferation within cranial neural tissue and the neural retina. Also acts as a regulator of migration of enteric neural crest cells (ENCCs) by activating PP1, leading to repression of the integrin signaling through the rho/rock pathway. In Xenopus laevis (African clawed frog), this protein is Phosphatase and actin regulator 4-A (phactr4-a).